Reading from the N-terminus, the 138-residue chain is Urease subunit beta (138 aa).

The interval 115–138 (RMRAAGFGDTGEAAPDDGDTESDQ) is disordered. Residues 128 to 138 (APDDGDTESDQ) show a composition bias toward acidic residues.

Belongs to the urease beta subunit family. As to quaternary structure, heterotrimer of UreA (gamma), UreB (beta) and UreC (alpha) subunits. Three heterotrimers associate to form the active enzyme.

It localises to the cytoplasm. It carries out the reaction urea + 2 H2O + H(+) = hydrogencarbonate + 2 NH4(+). Its pathway is nitrogen metabolism; urea degradation; CO(2) and NH(3) from urea (urease route): step 1/1. The sequence is that of Urease subunit beta from Haloarcula marismortui (strain ATCC 43049 / DSM 3752 / JCM 8966 / VKM B-1809) (Halobacterium marismortui).